Reading from the N-terminus, the 136-residue chain is Nucleoside diphosphate kinase (136 aa).

The ATP site is built by lysine 10, phenylalanine 58, arginine 86, threonine 92, arginine 104, and asparagine 114. The Pros-phosphohistidine intermediate role is filled by histidine 117.

This sequence belongs to the NDK family. In terms of assembly, homohexamer. Mg(2+) is required as a cofactor.

The protein localises to the cytoplasm. The enzyme catalyses a 2'-deoxyribonucleoside 5'-diphosphate + ATP = a 2'-deoxyribonucleoside 5'-triphosphate + ADP. It carries out the reaction a ribonucleoside 5'-diphosphate + ATP = a ribonucleoside 5'-triphosphate + ADP. In terms of biological role, major role in the synthesis of nucleoside triphosphates other than ATP. The ATP gamma phosphate is transferred to the NDP beta phosphate via a ping-pong mechanism, using a phosphorylated active-site intermediate. The chain is Nucleoside diphosphate kinase from Mycobacterium bovis (strain ATCC BAA-935 / AF2122/97).